A 227-amino-acid chain; its full sequence is DNA mismatch repair protein MutH (227 aa).

This sequence belongs to the MutH family.

It is found in the cytoplasm. In terms of biological role, sequence-specific endonuclease that cleaves unmethylated GATC sequences. It is involved in DNA mismatch repair. The sequence is that of DNA mismatch repair protein MutH from Vibrio vulnificus (strain CMCP6).